Here is a 109-residue protein sequence, read N- to C-terminus: Putative double-stranded DNA mimic protein Ent638_2296 (109 aa).

The protein belongs to the putative dsDNA mimic protein family.

In terms of biological role, may act as a double-stranded DNA (dsDNA) mimic. Probably regulates the activity of a dsDNA-binding protein. The sequence is that of Putative double-stranded DNA mimic protein Ent638_2296 from Enterobacter sp. (strain 638).